The sequence spans 226 residues: Beta-casein (226 aa).

Residues 1 to 51 (REKEELNVSSETVESLSSNEPDSSSEESITHINKEKSQKFKHEGQQQREVE) are disordered. Residue Ser-9 is modified to Phosphoserine. Thr-12 is subject to Phosphothreonine. 4 positions are modified to phosphoserine: Ser-15, Ser-17, Ser-18, and Ser-25. Positions 28–51 (SITHINKEKSQKFKHEGQQQREVE) are enriched in basic and acidic residues.

Belongs to the beta-casein family. Post-translationally, there are at least three different forms found in milk, with varying degrees of phosphorylation. These include form 5-P which is phosphorylated at three sites, this form is present in low amounts, form 6-P which is phosphorylated at six sites, and form 7-P which is phosphorylated at seven sites. Mammary gland specific. Secreted in milk.

Its subcellular location is the secreted. Functionally, important role in determination of the surface properties of the casein micelles. The chain is Beta-casein from Equus asinus (Donkey).